The following is a 962-amino-acid chain: DNA primase (962 aa).

The segment at 894-932 adopts a CHC2-type zinc-finger fold; sequence CLRARHARSPPARTFVALSVDAHDRLCISLSQQCFATKC.

It belongs to the herpesviridae DNA primase family. Associates with the helicase and the primase-associated factor to form the helicase-primase factor.

It is found in the host nucleus. Functionally, essential component of the helicase/primase complex. Unwinds the DNA at the replication forks and generates single-stranded DNA for both leading and lagging strand synthesis. The primase initiates primer synthesis and thereby produces large amount of short RNA primers on the lagging strand that the polymerase elongates using dNTPs. The protein is DNA primase (UL52) of Sus scrofa (Pig).